Reading from the N-terminus, the 168-residue chain is Crossover junction endodeoxyribonuclease RuvC (168 aa).

Active-site residues include Asp-8, Glu-68, and Asp-140. Residues Asp-8, Glu-68, and Asp-140 each coordinate Mg(2+).

This sequence belongs to the RuvC family. Homodimer which binds Holliday junction (HJ) DNA. The HJ becomes 2-fold symmetrical on binding to RuvC with unstacked arms; it has a different conformation from HJ DNA in complex with RuvA. In the full resolvosome a probable DNA-RuvA(4)-RuvB(12)-RuvC(2) complex forms which resolves the HJ. The cofactor is Mg(2+).

The protein resides in the cytoplasm. The enzyme catalyses Endonucleolytic cleavage at a junction such as a reciprocal single-stranded crossover between two homologous DNA duplexes (Holliday junction).. The RuvA-RuvB-RuvC complex processes Holliday junction (HJ) DNA during genetic recombination and DNA repair. Endonuclease that resolves HJ intermediates. Cleaves cruciform DNA by making single-stranded nicks across the HJ at symmetrical positions within the homologous arms, yielding a 5'-phosphate and a 3'-hydroxyl group; requires a central core of homology in the junction. The consensus cleavage sequence is 5'-(A/T)TT(C/G)-3'. Cleavage occurs on the 3'-side of the TT dinucleotide at the point of strand exchange. HJ branch migration catalyzed by RuvA-RuvB allows RuvC to scan DNA until it finds its consensus sequence, where it cleaves and resolves the cruciform DNA. The sequence is that of Crossover junction endodeoxyribonuclease RuvC from Gluconobacter oxydans (strain 621H) (Gluconobacter suboxydans).